Consider the following 70-residue polypeptide: Beta-defensin 107 (70 aa).

A signal peptide spans 1–26 (MPGAMKIFVFILAALILLAQIFQART). Disulfide bonds link Cys-41-Cys-55 and Cys-45-Cys-64.

It belongs to the beta-defensin family. Specifically expressed in testis.

It localises to the secreted. Its function is as follows. Has antibacterial activity. This is Beta-defensin 107 (DEFB107A) from Homo sapiens (Human).